We begin with the raw amino-acid sequence, 436 residues long: UPF0597 protein DP0591 (436 aa).

This sequence belongs to the UPF0597 family.

The chain is UPF0597 protein DP0591 from Desulfotalea psychrophila (strain LSv54 / DSM 12343).